Consider the following 357-residue polypeptide: Protein-glutamate methylesterase/protein-glutamine glutaminase 5 (357 aa).

In terms of domain architecture, Response regulatory spans 10 to 127 (RVLVVDDSSF…IDAQKAFKEE (118 aa)). Asp-61 is modified (4-aspartylphosphate). Positions 161–357 (PRPAGQRYQY…IGTEITKIAG (197 aa)) constitute a CheB-type methylesterase domain. Catalysis depends on residues Ser-176, His-203, and Asp-301.

The protein belongs to the CheB family. In terms of processing, phosphorylated by CheA. Phosphorylation of the N-terminal regulatory domain activates the methylesterase activity.

The protein localises to the cytoplasm. It carries out the reaction [protein]-L-glutamate 5-O-methyl ester + H2O = L-glutamyl-[protein] + methanol + H(+). The enzyme catalyses L-glutaminyl-[protein] + H2O = L-glutamyl-[protein] + NH4(+). Functionally, involved in chemotaxis. Part of a chemotaxis signal transduction system that modulates chemotaxis in response to various stimuli. Catalyzes the demethylation of specific methylglutamate residues introduced into the chemoreceptors (methyl-accepting chemotaxis proteins or MCP) by CheR. Also mediates the irreversible deamidation of specific glutamine residues to glutamic acid. In Geobacter metallireducens (strain ATCC 53774 / DSM 7210 / GS-15), this protein is Protein-glutamate methylesterase/protein-glutamine glutaminase 5.